We begin with the raw amino-acid sequence, 216 residues long: uncharacterized protein (216 aa).

S-adenosyl-L-methionine-binding residues include Gly56 and Glu77.

It belongs to the methyltransferase superfamily. YrrT family.

Its function is as follows. Could be a S-adenosyl-L-methionine-dependent methyltransferase. This is an uncharacterized protein from Alkaliphilus oremlandii (strain OhILAs) (Clostridium oremlandii (strain OhILAs)).